The sequence spans 415 residues: Amylovoran biosynthesis protein AmsJ (415 aa).

It belongs to the polysaccharide pyruvyl transferase family.

It functions in the pathway glycan metabolism; exopolysaccharide biosynthesis. Functionally, involved in the biosynthesis of amylovoran which functions as a virulence factor. The protein is Amylovoran biosynthesis protein AmsJ (amsJ) of Erwinia amylovora (Fire blight bacteria).